Here is a 142-residue protein sequence, read N- to C-terminus: Hemoglobin subunit alpha-1/2 (142 aa).

One can recognise a Globin domain in the interval 2–142; it reads VLSPADKTNI…VSTVLTSKYR (141 aa). Ser4 carries the post-translational modification Phosphoserine. Lys8 carries the post-translational modification N6-succinyllysine. Thr9 is subject to Phosphothreonine. At Lys12 the chain carries N6-succinyllysine. Lys17 is modified (N6-acetyllysine; alternate). Lys17 bears the N6-succinyllysine; alternate mark. Phosphotyrosine is present on Tyr25. Lys41 carries the post-translational modification N6-succinyllysine. An O2-binding site is contributed by His59. Position 88 (His88) interacts with heme b. Ser103 carries the post-translational modification Phosphoserine. Residue Thr109 is modified to Phosphothreonine. Ser125 bears the Phosphoserine mark. Thr135 and Thr138 each carry phosphothreonine. Ser139 is modified (phosphoserine).

This sequence belongs to the globin family. As to quaternary structure, heterotetramer of two alpha chains and two beta chains. In terms of tissue distribution, red blood cells.

Functionally, involved in oxygen transport from the lung to the various peripheral tissues. This Oryctolagus cuniculus (Rabbit) protein is Hemoglobin subunit alpha-1/2.